The sequence spans 290 residues: Nucleotide-binding protein Bpet0443 (290 aa).

9–16 (GISGSGKS) provides a ligand contact to ATP. 58 to 61 (DVRS) contacts GTP.

Belongs to the RapZ-like family.

In terms of biological role, displays ATPase and GTPase activities. This Bordetella petrii (strain ATCC BAA-461 / DSM 12804 / CCUG 43448) protein is Nucleotide-binding protein Bpet0443.